The chain runs to 32 residues: Chlorophyll a-b binding protein 2, chloroplastic (32 aa).

Positions 19 and 22 each coordinate chlorophyll a. Arg24 provides a ligand contact to chlorophyll b.

Belongs to the light-harvesting chlorophyll a/b-binding (LHC) protein family. As to quaternary structure, the LHC complex consists of chlorophyll a-b binding proteins. Requires Binds at least 14 chlorophylls (8 Chl-a and 6 Chl-b) and carotenoids such as lutein and neoxanthin. as cofactor. Post-translationally, photoregulated by reversible phosphorylation of its threonine residues.

The protein localises to the plastid. The protein resides in the chloroplast thylakoid membrane. In terms of biological role, the light-harvesting complex (LHC) functions as a light receptor, it captures and delivers excitation energy to photosystems with which it is closely associated. The sequence is that of Chlorophyll a-b binding protein 2, chloroplastic from Populus euphratica (Euphrates poplar).